The following is a 2647-amino-acid chain: Filamin-A (2647 aa).

The disordered stretch occupies residues 1 to 37; the sequence is MSSSHSRCGQSAAVASPGGSIDSRDAEMPATEKDLAE. Ser-2 is subject to N-acetylserine. The interval 2–274 is actin-binding; sequence SSSHSRCGQS…PKAKLKPGAP (273 aa). A phosphoserine mark is found at Ser-11, Ser-16, and Ser-20. Residues 22-37 are compositionally biased toward basic and acidic residues; the sequence is DSRDAEMPATEKDLAE. Residues Lys-42, Lys-43, and Lys-135 each participate in a glycyl lysine isopeptide (Lys-Gly) (interchain with G-Cter in ubiquitin) cross-link. Calponin-homology (CH) domains are found at residues 43–149 and 166–269; these read KIQQ…LHYS and QTPK…KAKL. Residues 271-294 form a disordered region; it reads PGAPLRPKLNPKKARAYGPGIEPT. Filamin repeat units lie at residues 276-374, 376-474, 475-570, 571-663, 667-763, 764-866, 867-965, 966-1061, 1062-1154, 1155-1249, 1250-1349, 1350-1442, 1443-1539, 1540-1636, and 1641-1740; these read RPKL…EVYV, KSQG…TVTV, GQAC…EVKV, GTEC…MADI, PQDF…RVNV, GAGS…RVKV, EPSH…SVGV, SPSL…PLEA, VAPT…KAHV, APCF…KLQV, EPAV…QVPV, TEGC…KVPV, HDVT…KVKV, LPTH…RVRA, and DASK…QVTA. Lys-299 participates in a covalent cross-link: Glycyl lysine isopeptide (Lys-Gly) (interchain with G-Cter in SUMO1); alternate. A Glycyl lysine isopeptide (Lys-Gly) (interchain with G-Cter in SUMO2); alternate cross-link involves residue Lys-299. N6-acetyllysine occurs at positions 376 and 508. N6-acetyllysine is present on residues Lys-700, Lys-781, Lys-837, Lys-865, and Lys-906. Ser-968 and Ser-1055 each carry phosphoserine. N6-acetyllysine; alternate is present on Lys-1071. Lys-1071 is modified (N6-succinyllysine; alternate). Ser-1084 is modified (phosphoserine). Thr-1089 is modified (phosphothreonine). A phosphoserine mark is found at Ser-1301 and Ser-1338. Lys-1372 is modified (N6-acetyllysine). Ser-1459 and Ser-1533 each carry phosphoserine. The segment at 1490 to 1607 is interaction with furin; it reads PKGLVEPVDV…DNHDGTYTVA (118 aa). Lys-1538 bears the N6-acetyllysine mark. Phosphoserine is present on residues Ser-1630 and Ser-1734. The segment at 1741 to 1778 is hinge 1; that stretch reads LAGDQPTVQTPLRSQQLAPQYNYPQGSQQTWIPERPMV. Thr-1750 is modified (phosphothreonine). Filamin repeat units follow at residues 1765-1860, 1861-1952, 1953-2039, 2042-2134, 2135-2230, 2233-2325, 2327-2420, and 2424-2516; these read QGSQ…QFYV, DYVN…TARV, TGDD…PVVI, SEIG…SVKV, TGEG…QFTV, LGEG…VVPV, SPSG…KIRV, and GHGG…KAKV. Ser-1835 is modified (phosphoserine). A phosphoserine mark is found at Ser-1967, Ser-2053, Ser-2128, Ser-2152, Ser-2158, Ser-2163, Ser-2180, Ser-2284, Ser-2327, and Ser-2329. The residue at position 2336 (Thr-2336) is a Phosphothreonine. Ser-2338, Ser-2370, Ser-2414, Ser-2510, Ser-2523, and Ser-2526 each carry phosphoserine. Residues 2517–2553 are hinge 2; that stretch reads TGPRLVSNHSLHETSSVFVDSLTKVATVPQHATSGPG. The self-association site, tail stretch occupies residues 2517–2647; it reads TGPRLVSNHS…PGSPYRIMVP (131 aa). One copy of the Filamin 24 repeat lies at 2552 to 2646; the sequence is PGPADVSKVV…IPGSPYRIMV (95 aa). Lys-2569 is modified (N6-acetyllysine; alternate). An N6-succinyllysine; alternate modification is found at Lys-2569. Lys-2575 carries the post-translational modification N6-acetyllysine. Thr-2599 carries the phosphothreonine modification. N6-acetyllysine occurs at positions 2607 and 2621.

The protein belongs to the filamin family. As to quaternary structure, homodimer. Interacts with FCGR1A, FLNB, FURIN, HSPB7, KCND2, INPPL1, MYOT, MYOZ1, PDLIM2, ARHGAP24, PSEN1, PSEN2 and ECSCR. Also interacts with various other binding partners in addition to filamentous actin. Interacts (via N-terminus) with TAF1B. Interacts (via N-terminus) with MIS18BP1 (via N-terminus). Interacts with TMEM67 (via C-terminus) and MKS1. Interacts (via actin-binding domain) with MICALL2 (via calponin-homology (CH) domain). Interacts with RFLNA and RFLNB. Interacts (via filamin repeat 5) with SYK; docks SYK to the plasma membrane. Interacts (via filamin repeats 19 and 21) with DRD3; increased PKA-mediated phosphorylation at Ser-2152. Interacts (via filamin repeat 21) with MAS1, AGTR1 and ADRA1D; increases PKA-mediated phosphorylation of FLNA at Ser-2152. Interacts (via filamin repeats 4, 9, 12, 17, 19, 21, and 23) with GP1BA (high affinity), ITGB7, ITGB2 and FBLIM1. Interacts with CEACAM1 (via cytoplasmic domain); inhibits cell migration and cell scattering by interfering with the interaction between FLNA and RALA. Interacts with FOXC1. Interacts (via calponin-homology (CH) domain 1 and filamin repeat 24) with CRMP1; the interaction alters FLNA ternary structure and thus promotes FLNA dissociation from F-actin. Interacts with DPYSL3/CRMP3 and DPYSL4/CRMP4. In terms of processing, phosphorylation at Ser-2152 is negatively regulated by the autoinhibited conformation of filamin repeats 19-21. Ligand binding induces a conformational switch triggering phosphorylation at Ser-2152 by PKA. Post-translationally, polyubiquitination in the CH1 domain by a SCF-like complex containing ASB2 leads to proteasomal degradation. Prior dissociation from actin may be required to expose the target lysines. Ubiquitinated in endothelial cells by RNF213 downstream of the non-canonical Wnt signaling pathway, leading to its degradation by the proteasome. In terms of tissue distribution, widely expressed. Highly expressed in Purkinje cells.

The protein resides in the cytoplasm. It is found in the cell cortex. The protein localises to the cytoskeleton. Its subcellular location is the perikaryon. It localises to the cell projection. The protein resides in the growth cone. It is found in the podosome. Functionally, actin binding protein that promotes orthogonal branching of actin filaments and links actin filaments to membrane glycoproteins. Anchors various transmembrane proteins to the actin cytoskeleton and serves as a scaffold for a wide range of cytoplasmic signaling proteins. Interaction with FLNB may allow neuroblast migration from the ventricular zone into the cortical plate. Tethers cell surface-localized furin, modulates its rate of internalization and directs its intracellular trafficking. Involved in ciliogenesis. Plays a role in cell-cell contacts and adherens junctions during the development of blood vessels, heart and brain organs. Plays a role in platelets morphology through interaction with SYK that regulates ITAM- and ITAM-like-containing receptor signaling, resulting in by platelet cytoskeleton organization maintenance. During the axon guidance process, required for growth cone collapse induced by SEMA3A-mediated stimulation of neurons. This chain is Filamin-A (Flna), found in Mus musculus (Mouse).